We begin with the raw amino-acid sequence, 165 residues long: Protein SprT (165 aa).

One can recognise a SprT-like domain in the interval 22-163; sequence LAQANLKLDR…RCVHCGEPLV (142 aa). Histidine 78 contacts Zn(2+). Glutamate 79 is a catalytic residue. Histidine 82 serves as a coordination point for Zn(2+).

Belongs to the SprT family. It depends on Zn(2+) as a cofactor.

The protein resides in the cytoplasm. The polypeptide is Protein SprT (Salmonella agona (strain SL483)).